We begin with the raw amino-acid sequence, 205 residues long: Small ribosomal subunit protein uS4 (205 aa).

The segment at I19 to L45 is disordered. Residues R94–S157 form the S4 RNA-binding domain.

In terms of assembly, part of the 30S ribosomal subunit. Contacts protein S5. The interaction surface between S4 and S5 is involved in control of translational fidelity. Post-translationally, may be methylated on an undetermined residue.

Functionally, one of the primary rRNA binding proteins, it binds directly to 16S rRNA where it nucleates assembly of the body of the 30S subunit. With S5 and S12 plays an important role in translational accuracy. This chain is Small ribosomal subunit protein uS4, found in Rhodopseudomonas palustris (strain ATCC BAA-98 / CGA009).